The sequence spans 95 residues: Integration host factor subunit beta (95 aa).

The protein belongs to the bacterial histone-like protein family. Heterodimer of an alpha and a beta chain.

Its function is as follows. This protein is one of the two subunits of integration host factor, a specific DNA-binding protein that functions in genetic recombination as well as in transcriptional and translational control. The chain is Integration host factor subunit beta from Shewanella sp. (strain ANA-3).